The following is a 195-amino-acid chain: Cysteine/O-acetylserine efflux protein (195 aa).

Over 1–9 the chain is Periplasmic; it reads MTPMLLSAF. The chain crosses the membrane as a helical span at residues 10–32; that stretch reads WTYTLITALTPGPNNILALSAAT. Topologically, residues 33–46 are cytoplasmic; the sequence is AHGFRQSIRVLAGM. The helical transmembrane segment at 47-67 threads the bilayer; the sequence is SLGFLVVMLLCAGIAFSLAVI. At 68-69 the chain is on the periplasmic side; that stretch reads DP. The helical transmembrane segment at 70–90 threads the bilayer; that stretch reads AIIHLLSWVGAAYILWLAWKI. Over 91-104 the chain is Cytoplasmic; the sequence is ATSPAADEKVRPKP. A helical membrane pass occupies residues 105-125; sequence VGFWVSFGLQFVNVKIILYGI. Residues 126-141 lie on the Periplasmic side of the membrane; that stretch reads TALSTFVLPQTQALNW. The chain crosses the membrane as a helical span at residues 142 to 162; it reads VIGVSILLALIGTFGNVCWAL. At 163 to 176 the chain is on the cytoplasmic side; that stretch reads AGHLFQRAFRHYGR. Residues 177 to 194 traverse the membrane as a helical segment; sequence QLNIILALLLVYCAVRIF. Position 195 (Y195) is a topological domain, periplasmic.

The protein belongs to the Rht family.

It is found in the cell inner membrane. It catalyses the reaction O-acetyl-L-serine(in) = O-acetyl-L-serine(out). It carries out the reaction L-cysteine(in) = L-cysteine(out). In terms of biological role, exporter of O-acetylserine (OAS) and cysteine. This Salmonella paratyphi A (strain ATCC 9150 / SARB42) protein is Cysteine/O-acetylserine efflux protein (eamB).